Here is a 169-residue protein sequence, read N- to C-terminus: ATP synthase subunit b (169 aa).

A helical transmembrane segment spans residues 11–31 (KLPLGNMLFIIISFLVLMVIL).

Belongs to the ATPase B chain family. As to quaternary structure, F-type ATPases have 2 components, F(1) - the catalytic core - and F(0) - the membrane proton channel. F(1) has five subunits: alpha(3), beta(3), gamma(1), delta(1), epsilon(1). F(0) has three main subunits: a(1), b(2) and c(10-14). The alpha and beta chains form an alternating ring which encloses part of the gamma chain. F(1) is attached to F(0) by a central stalk formed by the gamma and epsilon chains, while a peripheral stalk is formed by the delta and b chains.

The protein resides in the cell membrane. Its function is as follows. F(1)F(0) ATP synthase produces ATP from ADP in the presence of a proton or sodium gradient. F-type ATPases consist of two structural domains, F(1) containing the extramembraneous catalytic core and F(0) containing the membrane proton channel, linked together by a central stalk and a peripheral stalk. During catalysis, ATP synthesis in the catalytic domain of F(1) is coupled via a rotary mechanism of the central stalk subunits to proton translocation. Component of the F(0) channel, it forms part of the peripheral stalk, linking F(1) to F(0). This chain is ATP synthase subunit b, found in Leuconostoc citreum (strain KM20).